Consider the following 343-residue polypeptide: Anthranilate phosphoribosyltransferase (343 aa).

Residues G84, 87–88 (GD), T92, 94–97 (NIST), 112–120 (KHGNRGVSS), and S124 contribute to the 5-phospho-alpha-D-ribose 1-diphosphate site. G84 provides a ligand contact to anthranilate. Mg(2+) is bound at residue S96. Residue N115 participates in anthranilate binding. R170 is a binding site for anthranilate. Mg(2+) contacts are provided by D229 and E230.

The protein belongs to the anthranilate phosphoribosyltransferase family. As to quaternary structure, homodimer. It depends on Mg(2+) as a cofactor.

It carries out the reaction N-(5-phospho-beta-D-ribosyl)anthranilate + diphosphate = 5-phospho-alpha-D-ribose 1-diphosphate + anthranilate. It functions in the pathway amino-acid biosynthesis; L-tryptophan biosynthesis; L-tryptophan from chorismate: step 2/5. Catalyzes the transfer of the phosphoribosyl group of 5-phosphorylribose-1-pyrophosphate (PRPP) to anthranilate to yield N-(5'-phosphoribosyl)-anthranilate (PRA). This chain is Anthranilate phosphoribosyltransferase, found in Burkholderia thailandensis (strain ATCC 700388 / DSM 13276 / CCUG 48851 / CIP 106301 / E264).